Consider the following 235-residue polypeptide: Small ribosomal subunit protein eS4 (235 aa).

The region spanning 38–101 (IPLLVLVRDF…EKSYRILFDE (64 aa)) is the S4 RNA-binding domain.

It belongs to the eukaryotic ribosomal protein eS4 family.

This chain is Small ribosomal subunit protein eS4 (rps4e), found in Archaeoglobus fulgidus (strain ATCC 49558 / DSM 4304 / JCM 9628 / NBRC 100126 / VC-16).